Here is a 232-residue protein sequence, read N- to C-terminus: Thrombin-like enzyme bothrombin (232 aa).

Positions 1–223 (VIGGDECDIN…YLPWIQSIIA (223 aa)) constitute a Peptidase S1 domain. 6 cysteine pairs are disulfide-bonded: C7–C139, C26–C42, C74–C230, C118–C184, C150–C163, and C174–C199. Active-site charge relay system residues include H41 and D86. N-linked (GlcNAc...) asparagine glycosylation is found at N98 and N146. Catalysis depends on S178, which acts as the Charge relay system. N225 carries N-linked (GlcNAc...) asparagine glycosylation.

It belongs to the peptidase S1 family. Snake venom subfamily. Monomer. Expressed by the venom gland.

It is found in the secreted. It catalyses the reaction Selective cleavage of Arg-|-Xaa bond in fibrinogen, to form fibrin, and release fibrinopeptide A. The specificity of further degradation of fibrinogen varies with species origin of the enzyme.. With respect to regulation, inhibited by diisopropylfluorophosphate (DFP), but not by hirudin. Thrombin-like snake venom serine protease that clots fibrinogen by releasing fibrinopeptide A from the alpha chain of fibrinogen (FGA), induces platelet aggregation through its interaction with GPIb (GP1BA/GP1BB), and activates factor VIII (F8). This chain is Thrombin-like enzyme bothrombin, found in Bothrops jararaca (Jararaca).